The primary structure comprises 201 residues: Ribonuclease HII (201 aa).

Residues Asn-14–Glu-201 enclose the RNase H type-2 domain. A divalent metal cation is bound by residues Asp-20, Glu-21, and Asp-112.

The protein belongs to the RNase HII family. Requires Mn(2+) as cofactor. Mg(2+) is required as a cofactor.

It localises to the cytoplasm. The enzyme catalyses Endonucleolytic cleavage to 5'-phosphomonoester.. Endonuclease that specifically degrades the RNA of RNA-DNA hybrids. In Photobacterium profundum (strain SS9), this protein is Ribonuclease HII.